Consider the following 485-residue polypeptide: DNA polymerase subunit gamma-2 (485 aa).

Residues 28 to 65 (GQPELLTERSSPKGGHVKSHAELEGNGEHPEAPGSGEG) are disordered. Position 38 is a phosphoserine (Ser-38). Residues 46-58 (SHAELEGNGEHPE) are compositionally biased toward basic and acidic residues.

In terms of assembly, heterotrimer composed of a catalytic subunit and a homodimer of accessory subunits (POLG:POLG2).

The protein localises to the mitochondrion. The protein resides in the mitochondrion matrix. It is found in the mitochondrion nucleoid. Accessory subunit of DNA polymerase gamma solely responsible for replication of mitochondrial DNA (mtDNA). Acts as an allosteric regulator of the holoenzyme activities. Enhances the polymerase activity and the processivity of POLG by increasing its interactions with the DNA template. Suppresses POLG exonucleolytic proofreading especially toward homopolymeric templates bearing mismatched termini. Binds to single-stranded DNA. The chain is DNA polymerase subunit gamma-2 from Homo sapiens (Human).